We begin with the raw amino-acid sequence, 120 residues long: NAD(P)H-quinone oxidoreductase subunit 3, chloroplastic (120 aa).

3 helical membrane-spanning segments follow: residues 10 to 30 (FLVFLIIACLIPVLALSASKL), 64 to 84 (MFALVFVIFDVETVFLYPWAV), and 89 to 109 (MGFISFLEALVFLSILIVGLV).

The protein belongs to the complex I subunit 3 family. NDH is composed of at least 16 different subunits, 5 of which are encoded in the nucleus.

The protein resides in the plastid. Its subcellular location is the chloroplast thylakoid membrane. The catalysed reaction is a plastoquinone + NADH + (n+1) H(+)(in) = a plastoquinol + NAD(+) + n H(+)(out). It carries out the reaction a plastoquinone + NADPH + (n+1) H(+)(in) = a plastoquinol + NADP(+) + n H(+)(out). Functionally, NDH shuttles electrons from NAD(P)H:plastoquinone, via FMN and iron-sulfur (Fe-S) centers, to quinones in the photosynthetic chain and possibly in a chloroplast respiratory chain. The immediate electron acceptor for the enzyme in this species is believed to be plastoquinone. Couples the redox reaction to proton translocation, and thus conserves the redox energy in a proton gradient. The polypeptide is NAD(P)H-quinone oxidoreductase subunit 3, chloroplastic (Chlorokybus atmophyticus (Soil alga)).